Consider the following 345-residue polypeptide: MDIFREIASSMKGENVFISPASISSVLTILYYGANGSTAEQLSKYVEKEENMDKVSAQNISFKSINKVYGRYSAVFKDSFLRKIGDKFQTVDFTDCRTIDAINKCVDIFTEGKINPLLDEPLSPDTCLLAISAVYFKAKWLTPFEKEFTSDYPFYVSPTEMVDVSMMSMYGKAFNHASVKESFGNFSIIELPYVGDTSMMVILPDKIDGLESIEQNLTDTNFKKWCNSLEATFIDVHIPKFKVTGSYNLVDTLVKSGLTEVFGSTGDYSNMCNSDVSVDAMIHKTYIDVNEEYTEAAAATCALVSDCASTITNEFCVDHPFIYVIRHVDGKILFVGRYCSPTTNC.

It belongs to the serpin family. Poxviruses subfamily.

The protein localises to the host cytoplasm. Its function is as follows. Viral serpin that inhibits both cysteine and serine proteinases involved in the regulation of host inflammatory and apoptosis processes. Major anti-apoptotic protein which inhibits both intrinsic and extrinsic pathways and strongly cleaves host CASP1 and CASP8 but is a rather poor inhibitor of host CASP3. Prevents the proteolytic activity of host interleukin-1-beta converting enzyme (ICE) and ICE-like enzymes. Can also block apoptosis through host tumor necrosis factor (TNF) receptor. The inhibition of host ICE is an example of a 'cross-class' interaction, in which a serpin inhibits a non-serine proteinase. Also inhibits granzyme B. The chain is Serine proteinase inhibitor 2 (OPG199) from Vaccinia virus (strain Western Reserve) (VACV).